We begin with the raw amino-acid sequence, 175 residues long: MLFNFLQKNLCKAFTFNMTSGHCQQTLATLFRSTLLLSGDNTKLFTPIRPQSWTCVLNYFIYLLCSQVTPETMFKDIVSFLQANGASSACWVLPLNFTETRAPKQQVSRLPSKWKILTADGSPQPWQVYWGIPSCLAYASYVGHLAEIATDWGKVTETNTQELLNHIFDLLRIFF.

This is an uncharacterized protein from Connochaetes taurinus (Blue wildebeest).